A 485-amino-acid polypeptide reads, in one-letter code: N-succinylglutamate 5-semialdehyde dehydrogenase (485 aa).

220–225 is a binding site for NAD(+); sequence GSANTG. Residues Glu243 and Cys278 contribute to the active site.

This sequence belongs to the aldehyde dehydrogenase family. AstD subfamily.

The enzyme catalyses N-succinyl-L-glutamate 5-semialdehyde + NAD(+) + H2O = N-succinyl-L-glutamate + NADH + 2 H(+). The protein operates within amino-acid degradation; L-arginine degradation via AST pathway; L-glutamate and succinate from L-arginine: step 4/5. In terms of biological role, catalyzes the NAD-dependent reduction of succinylglutamate semialdehyde into succinylglutamate. This Vibrio atlanticus (strain LGP32) (Vibrio splendidus (strain Mel32)) protein is N-succinylglutamate 5-semialdehyde dehydrogenase.